Here is a 75-residue protein sequence, read N- to C-terminus: Protein SlyX homolog (75 aa).

A disordered region spans residues 56 to 75; that stretch reads KNMDSSNMEDPANEPPPPHY.

It belongs to the SlyX family.

The chain is Protein SlyX homolog from Vibrio parahaemolyticus serotype O3:K6 (strain RIMD 2210633).